A 365-amino-acid chain; its full sequence is 1-acyl-sn-glycerol-3-phosphate acyltransferase epsilon (365 aa).

Residues 15–35 (LLPSVLLLGSAPTYLLAWTLW) traverse the membrane as a helical segment. The short motif at 93-98 (HQSTVD) is the HXXXXD motif element. The chain crosses the membrane as a helical span at residues 345–365 (LYMGTWLYGTLLGCLWFVIKA).

Belongs to the 1-acyl-sn-glycerol-3-phosphate acyltransferase family. In terms of tissue distribution, widely expressed.

The protein localises to the endoplasmic reticulum membrane. It localises to the nucleus envelope. It is found in the mitochondrion. It carries out the reaction a 1-acyl-sn-glycero-3-phosphate + an acyl-CoA = a 1,2-diacyl-sn-glycero-3-phosphate + CoA. It catalyses the reaction 1-(9Z-octadecenoyl)-sn-glycero-3-phosphate + tetradecanoyl-CoA = 1-(9Z)-octadecenoyl-2-tetradecanoyl-sn-glycero-3-phosphate + CoA. The enzyme catalyses pentadecanoyl-CoA + 1-(9Z-octadecenoyl)-sn-glycero-3-phosphate = 1-(9Z)-octadecenoyl-2-pentadecanoyl-sn-glycero-3-phosphate + CoA. The catalysed reaction is 1-(9Z-octadecenoyl)-sn-glycero-3-phosphate + octadecanoyl-CoA = 1-(9Z-octadecenoyl)-2-octadecanoyl-sn-glycero-3-phosphate + CoA. It carries out the reaction nonadecanoyl-CoA + 1-(9Z-octadecenoyl)-sn-glycero-3-phosphate = 1-(9Z)-octadecenoyl-2-nonadecanoyl-sn-glycero-3-phosphate + CoA. It catalyses the reaction 1-(9Z-octadecenoyl)-sn-glycero-3-phosphoethanolamine + (9Z)-octadecenoyl-CoA = 1,2-di-(9Z-octadecenoyl)-sn-glycero-3-phosphoethanolamine + CoA. The enzyme catalyses 1-(9Z-octadecenoyl)-sn-glycero-3-phosphocholine + (9Z)-octadecenoyl-CoA = 1,2-di-(9Z-octadecenoyl)-sn-glycero-3-phosphocholine + CoA. The catalysed reaction is 1-(9Z-octadecenoyl)-sn-glycero-3-phospho-(1D-myo-inositol) + (5Z,8Z,11Z,14Z)-eicosatetraenoyl-CoA = 1-(9Z-octadecenoyl)-2-(5Z,8Z,11Z,14Z-eicosatetraenoyl)-sn-glycero-3-phospho-1D-myo-inositol + CoA. It carries out the reaction 1-(9Z-octadecenoyl)-sn-glycero-3-phospho-L-serine + (9Z)-octadecenoyl-CoA = 1,2-di-(9Z)-octadecenoyl-sn-glycero-3-phospho-L-serine + CoA. It catalyses the reaction 1-(9Z-octadecenoyl)-sn-glycero-3-phospho-L-serine + (5Z,8Z,11Z,14Z)-eicosatetraenoyl-CoA = 1-(9Z-octadecenoyl)-2-(5Z,8Z,11Z,14Z-eicosatetraenoyl)-sn-glycero-3-phospho-L-serine + CoA. The enzyme catalyses 1-hexadecanoyl-sn-glycero-3-phosphate + (9Z)-octadecenoyl-CoA = 1-hexadecanoyl-2-(9Z-octadecenoyl)-sn-glycero-3-phosphate + CoA. The catalysed reaction is 1-heptadecanoyl-sn-glycero-3-phosphate + (9Z)-octadecenoyl-CoA = 1-heptadecanoyl-2-(9Z)-octadecenoyl-sn-glycero-3-phosphate + CoA. It carries out the reaction 1-(5Z,8Z,11Z,14Z-eicosatetraenoyl)-sn-glycero-3-phosphate + (9Z)-octadecenoyl-CoA = 1-(5Z,8Z,11Z,14Z)-eicosatetraenoyl-2-(9Z)-octadecenoyl-sn-glycero-3-phosphate + CoA. It catalyses the reaction 1-octadecanoyl-sn-glycero-3-phosphate + (9Z)-octadecenoyl-CoA = 1-octadecanoyl-2-(9Z-octadecenoyl)-sn-glycero-3-phosphate + CoA. The enzyme catalyses 1-(9Z-octadecenoyl)-sn-glycero-3-phosphate + (5Z,8Z,11Z,14Z)-eicosatetraenoyl-CoA = 1-(9Z)-octadecenoyl-2-(5Z,8Z,11Z,14Z)-eicosatetraenoyl-sn-glycero-3-phosphate + CoA. The catalysed reaction is heptadecanoyl-CoA + 1-(9Z-octadecenoyl)-sn-glycero-3-phosphate = 1-(9Z)-octadecenoyl-2-heptadecanoyl-sn-glycero-3-phosphate + CoA. It carries out the reaction 1-(9Z-octadecenoyl)-sn-glycero-3-phosphocholine + (5Z,8Z,11Z,14Z)-eicosatetraenoyl-CoA = 1-(9Z)-octadecenoyl-2-(5Z,8Z,11Z,14Z)-icosatetraenoyl-sn-glycero-3-phosphocholine + CoA. It catalyses the reaction 1-(9Z-octadecenoyl)-sn-glycero-3-phosphate + (9Z)-octadecenoyl-CoA = 1,2-di-(9Z-octadecenoyl)-sn-glycero-3-phosphate + CoA. The enzyme catalyses 1-(9Z-octadecenoyl)-sn-glycero-3-phosphate + hexadecanoyl-CoA = 1-hexadecanoyl-2-(9Z-octadecenoyl)-sn-glycero-3-phosphate + CoA. It functions in the pathway phospholipid metabolism; CDP-diacylglycerol biosynthesis; CDP-diacylglycerol from sn-glycerol 3-phosphate: step 2/3. Its function is as follows. Converts 1-acyl-sn-glycerol-3-phosphate (lysophosphatidic acid or LPA) into 1,2-diacyl-sn-glycerol-3-phosphate (phosphatidic acid or PA) by incorporating an acyl moiety at the sn-2 position of the glycerol backbone. Acts on LPA containing saturated or unsaturated fatty acids C15:0-C20:4 at the sn-1 position using C18:1-CoA as the acyl donor. Also acts on lysophosphatidylethanolamine using oleoyl-CoA, but not arachidonoyl-CoA, and lysophosphatidylinositol using arachidonoyl-CoA, but not oleoyl-CoA. Activity toward lysophosphatidylglycerol not detectable. This chain is 1-acyl-sn-glycerol-3-phosphate acyltransferase epsilon (Agpat5), found in Mus musculus (Mouse).